Here is a 691-residue protein sequence, read N- to C-terminus: Calcium-binding and coiled-coil domain-containing protein 1 (691 aa).

The segment at Met1 to Val30 is p300 KIX-binding. The tract at residues Met1–Thr190 is N-terminal AD (CTNNB1 binding site). At Ser4 the chain carries Phosphoserine. Residues Ser45–Asp125 form an interaction with GATA1 region. 3 coiled-coil regions span residues Lys145–Leu205, Glu232–Glu339, and Gln417–Lys514. The tract at residues Arg501–Glu691 is C-terminal AD (CTNNB1 binding site); interaction with CCAR1. Residues Asp512–Val605 form a disordered region. The UBZ1-type zinc finger occupies Trp653–His679. 4 residues coordinate Zn(2+): Cys656, Cys659, His675, and His679.

This sequence belongs to the CALCOCO family. As to quaternary structure, part of a calphoglin complex consisting of CALCOCO1, PPA1 and PGM. Interacts with the bHLH-PAS domains of GRIP1, AHR and ARNT. Interacts with CTNNB1 via both its N- and C-terminal regions. Interacts with EP300. Interacts with CCAR1 (via N-terminus) and GATA1. In terms of tissue distribution, expressed in all tissues examined except spleen, with high levels of expression in the heart and kidney.

It is found in the cytoplasm. Its subcellular location is the nucleus. Its function is as follows. Functions as a coactivator for aryl hydrocarbon and nuclear receptors (NR). Recruited to promoters through its contact with the N-terminal basic helix-loop-helix-Per-Arnt-Sim (PAS) domain of transcription factors or coactivators, such as NCOA2. During ER-activation acts synergistically in combination with other NCOA2-binding proteins, such as EP300, CREBBP and CARM1. Involved in the transcriptional activation of target genes in the Wnt/CTNNB1 pathway. Functions as a secondary coactivator in LEF1-mediated transcriptional activation via its interaction with CTNNB1. Coactivator function for nuclear receptors and LEF1/CTNNB1 involves differential utilization of two different activation regions. In association with CCAR1 enhances GATA1- and MED1-mediated transcriptional activation from the gamma-globin promoter during erythroid differentiation of K562 erythroleukemia cells. This Mus musculus (Mouse) protein is Calcium-binding and coiled-coil domain-containing protein 1 (Calcoco1).